The following is a 180-amino-acid chain: Hypoxanthine-guanine phosphoribosyltransferase (180 aa).

Residues K43 and G44 each contribute to the diphosphate site. Mg(2+)-binding residues include E99 and D100. D103 serves as the catalytic Proton acceptor. GMP contacts are provided by residues K131, 152–153, and D159; that span reads FI. R165 lines the diphosphate pocket.

This sequence belongs to the purine/pyrimidine phosphoribosyltransferase family. It depends on Mg(2+) as a cofactor.

The protein localises to the cytoplasm. It catalyses the reaction IMP + diphosphate = hypoxanthine + 5-phospho-alpha-D-ribose 1-diphosphate. The catalysed reaction is GMP + diphosphate = guanine + 5-phospho-alpha-D-ribose 1-diphosphate. It participates in purine metabolism; IMP biosynthesis via salvage pathway; IMP from hypoxanthine: step 1/1. It functions in the pathway purine metabolism; GMP biosynthesis via salvage pathway; GMP from guanine: step 1/1. Functionally, purine salvage pathway enzyme that catalyzes the transfer of the ribosyl-5-phosphate group from 5-phospho-alpha-D-ribose 1-diphosphate (PRPP) to the N9 position of the 6-oxopurines hypoxanthine and guanine to form the corresponding ribonucleotides IMP (inosine 5'-monophosphate) and GMP (guanosine 5'-monophosphate), with the release of PPi. This is Hypoxanthine-guanine phosphoribosyltransferase (hpt) from Streptococcus pyogenes serotype M3 (strain ATCC BAA-595 / MGAS315).